The chain runs to 463 residues: Ribosomal protein uS12 methylthiotransferase RimO (463 aa).

The region spanning 15–130 is the MTTase N-terminal domain; that stretch reads PKVGMVSLGC…VMQVVHSHLP (116 aa). C24, C60, C89, C161, C165, and C168 together coordinate [4Fe-4S] cluster. The region spanning 147-392 is the Radical SAM core domain; sequence LTPRHYAYLK…MEVAEEVSAA (246 aa). In terms of domain architecture, TRAM spans 395–463; it reads ERKVGKTLKV…ADGHDLWGEV (69 aa).

This sequence belongs to the methylthiotransferase family. RimO subfamily. The cofactor is [4Fe-4S] cluster.

It localises to the cytoplasm. It catalyses the reaction L-aspartate(89)-[ribosomal protein uS12]-hydrogen + (sulfur carrier)-SH + AH2 + 2 S-adenosyl-L-methionine = 3-methylsulfanyl-L-aspartate(89)-[ribosomal protein uS12]-hydrogen + (sulfur carrier)-H + 5'-deoxyadenosine + L-methionine + A + S-adenosyl-L-homocysteine + 2 H(+). Catalyzes the methylthiolation of an aspartic acid residue of ribosomal protein uS12. This chain is Ribosomal protein uS12 methylthiotransferase RimO, found in Burkholderia thailandensis (strain ATCC 700388 / DSM 13276 / CCUG 48851 / CIP 106301 / E264).